A 187-amino-acid chain; its full sequence is Proenkephalin-A (187 aa).

4 consecutive propeptides follow at residues 52 to 70, 80 to 143, 153 to 163, and 173 to 187; these read MDELYPQEPEEEAPAEILA, DAEE…KMLQ, VGRPEWWMDYQ, and FADSLPSDEEGESYS. Residues 81–132 form a disordered region; that stretch reads AEEEEDALASSSDLLKELLGPGETETAAAPRGRDDEDVSKSHGGFMRALKGS. Over residues 88–99 the composition is skewed to low complexity; it reads LASSSDLLKELL. The span at 111-120 shows a compositional bias: basic and acidic residues; the sequence is RGRDDEDVSK. At serine 187 the chain carries Phosphoserine.

This sequence belongs to the opioid neuropeptide precursor family. In terms of processing, processed and degraded by ACE. The N-terminal domain contains 6 conserved cysteines thought to be involved in disulfide bonding and/or processing. Post-translationally, proenkephalin-A is cleaved by CTSL to generate Met-enkephalin.

The protein localises to the cytoplasmic vesicle. Its subcellular location is the secretory vesicle. It localises to the chromaffin granule lumen. It is found in the secreted. Its function is as follows. Neuropeptide that competes with and mimic the effects of opiate drugs. They play a role in a number of physiologic functions, including pain perception and responses to stress. The protein is Proenkephalin-A (PENK) of Felis catus (Cat).